The chain runs to 273 residues: Ribosomal RNA small subunit methyltransferase A (273 aa).

S-adenosyl-L-methionine contacts are provided by Asn-19, Leu-21, Gly-46, Glu-71, Asp-94, and Asn-117.

The protein belongs to the class I-like SAM-binding methyltransferase superfamily. rRNA adenine N(6)-methyltransferase family. RsmA subfamily.

The protein localises to the cytoplasm. It carries out the reaction adenosine(1518)/adenosine(1519) in 16S rRNA + 4 S-adenosyl-L-methionine = N(6)-dimethyladenosine(1518)/N(6)-dimethyladenosine(1519) in 16S rRNA + 4 S-adenosyl-L-homocysteine + 4 H(+). Its function is as follows. Specifically dimethylates two adjacent adenosines (A1518 and A1519) in the loop of a conserved hairpin near the 3'-end of 16S rRNA in the 30S particle. May play a critical role in biogenesis of 30S subunits. This Burkholderia ambifaria (strain MC40-6) protein is Ribosomal RNA small subunit methyltransferase A.